Consider the following 772-residue polypeptide: Bromo adjacent homology domain-containing 1 protein (772 aa).

2 disordered regions span residues 1-63 (MTHT…RSLV) and 77-117 (LENV…PRKR). Ser-8 is modified (phosphoserine). A compositionally biased stretch (basic residues) spans 49 to 61 (TGRRKNYPLRKRS). 2 positions are modified to phosphoserine: Ser-101 and Ser-121. Disordered regions lie at residues 131–357 (LLER…PADY), 521–582 (QTVA…RTNG), and 723–743 (PSRK…PHRT). 3 stretches are compositionally biased toward basic and acidic residues: residues 147 to 158 (RGGDPHRSRDRA), 170 to 182 (RLGD…RDLS), and 189 to 199 (EGARRDGDPAP). Ser-182 carries the phosphoserine modification. Ser-204 carries the phosphoserine modification. Residues 280 to 289 (SAPPHGPPTQ) show a composition bias toward pro residues. Residues 299–310 (LENPLRPNLPLL) show a composition bias toward low complexity. Pro residues predominate over residues 340–352 (FPAPQLSPLPMPG). The segment covering 536–548 (GSKSGLRTGSSCR) has biased composition (polar residues). Positions 549 to 580 (HTVRSKAARRPSHPKQPRAQRPRPRRRRRRRT) are enriched in basic residues. Thr-580 is modified (phosphothreonine). One can recognise a BAH domain in the interval 616-771 (ETIRVRDTVL…FRHGRILKNP (156 aa)).

Interacts with CBX5 (HP1 alpha), HDAC5, MBD1 and SP1. In terms of processing, ubiquitinated in a FBXO11-dependent manner; leading to degradation.

It is found in the nucleus. The protein resides in the chromosome. Heterochromatin protein that acts as a transcription repressor and has the ability to promote the formation of large heterochromatic domains. May act by recruiting heterochromatin proteins such as CBX5 (HP1 alpha), HDAC5 and MBD1. Represses IGF2 expression by binding to its CpG-rich P3 promoter and recruiting heterochromatin proteins. The sequence is that of Bromo adjacent homology domain-containing 1 protein (Bahd1) from Mus musculus (Mouse).